The primary structure comprises 236 residues: Ribose-5-phosphate isomerase A (236 aa).

Residues 28 to 31 (TGST), 83 to 86 (DGAD), and 96 to 99 (KGGG) each bind substrate. The active-site Proton acceptor is E105. Residue K123 participates in substrate binding.

This sequence belongs to the ribose 5-phosphate isomerase family. Homodimer.

The catalysed reaction is aldehydo-D-ribose 5-phosphate = D-ribulose 5-phosphate. It functions in the pathway carbohydrate degradation; pentose phosphate pathway; D-ribose 5-phosphate from D-ribulose 5-phosphate (non-oxidative stage): step 1/1. Its function is as follows. Catalyzes the reversible conversion of ribose-5-phosphate to ribulose 5-phosphate. This is Ribose-5-phosphate isomerase A from Methylorubrum extorquens (strain CM4 / NCIMB 13688) (Methylobacterium extorquens).